The following is a 522-amino-acid chain: Acetylcholine receptor subunit delta (522 aa).

The N-terminal stretch at 1–21 is a signal peptide; it reads MGNIHFVYLLISCLYYSGCSG. The Extracellular segment spans residues 22–245; sequence VNEEERLIND…VTFYLIIRRK (224 aa). 3 N-linked (GlcNAc...) asparagine glycosylation sites follow: N91, N164, and N229. The cysteines at positions 151 and 165 are disulfide-linked. A run of 3 helical transmembrane segments spans residues 246 to 270, 278 to 295, and 312 to 333; these read PLFY…AFYL, MSTA…LLLT, and YLMF…VLNF. The Cytoplasmic portion of the chain corresponds to 334-476; the sequence is HFRTPSTHVL…WNLVGQTIDR (143 aa). Y393 carries the phosphotyrosine; by Tyr-kinases modification. The helical transmembrane segment at 477 to 497 threads the bilayer; it reads LSMFIITPVMVLGTIFIFVMG.

This sequence belongs to the ligand-gated ion channel (TC 1.A.9) family. Acetylcholine receptor (TC 1.A.9.1) subfamily. In terms of assembly, pentamer of two alpha chains, and one each of the beta, delta, and gamma chains.

Its subcellular location is the postsynaptic cell membrane. It localises to the cell membrane. The catalysed reaction is K(+)(in) = K(+)(out). It carries out the reaction Na(+)(in) = Na(+)(out). In terms of biological role, after binding acetylcholine, the AChR responds by an extensive change in conformation that affects all subunits and leads to opening of an ion-conducting channel across the plasma membrane. The chain is Acetylcholine receptor subunit delta (chrnd) from Tetronarce californica (Pacific electric ray).